Here is a 577-residue protein sequence, read N- to C-terminus: Leucine-rich repeat protein soc-2 homolog (577 aa).

2 stretches are compositionally biased toward basic and acidic residues: residues 1–10 (MRRTKGRTDS) and 33–48 (STAHKSDKKHDPEAKK). The interval 1 to 71 (MRRTKGRTDS…PTVKKRSTPS (71 aa)) is disordered. LRR repeat units lie at residues 87 to 109 (GATRLDLSKAAVTVLPKELKELT), 110 to 131 (SLRELYLYGNRIAVLPPEVGLL), 133 to 155 (NLETLALSENNLTTLPDNLVKLT), 156 to 177 (KLKVLDLRHNKIKEIPDVIYKL), 179 to 201 (TLTTLYLRFNRISVVESGIGNLK), 202 to 223 (LLERLSLRENKIKILPRVIGQL), 225 to 246 (HLVTLDISHNHIENLPAEIGNC), 248 to 269 (HMTSLDLQHNDIPSLPDSIGRL), 271 to 292 (AMTRLGLRYNQLSSLPDSLANC), 294 to 315 (GIDEFNIEGNNIAELPEKLLSS), 318 to 339 (NLTSLTLSRNKFEVFPAGPPKQ), 342 to 363 (QVNTFIMEHNRMQKIPFGVFNK), 366 to 387 (YLSKLNVKDNQLTSLPLDFGSW), 389 to 410 (SLVELNVATNQISKLPEDIQWL), 412 to 434 (NLEVLILSNNLLKKLPRGIGALR), 435 to 456 (KLRVLDIEENKLESIPTEIEYL), 458 to 479 (SLERLVLQSNCLGSLPRSIGYL), 481 to 502 (SVTYLSVGENELVSVPQEIGNM), 504 to 526 (SLEQLYLNDNENLQSLPYELVLC), and 528 to 549 (SLQIMSIENCPLSALPSQIVAG).

It belongs to the SHOC2 family.

Functionally, acts as a Ras effector and participates in MAPK pathway activation. Probably acts as a scaffolding protein in a protein phosphatase complex that specifically dephosphorylates Raf kinase and stimulate Raf activity at specialized signaling complexes upon Ras activation. The protein is Leucine-rich repeat protein soc-2 homolog of Nematostella vectensis (Starlet sea anemone).